We begin with the raw amino-acid sequence, 475 residues long: MHFETVIGLEVHVELKTDSKMFSPSPAHFGAEPNSNTNVIDLAYPGVLPVVNKRAVDWAMRAAMALNMEIATESKFDRKNYFYPDNPKAYQISQFDQPIGENGYIDIEVDGETKRIGITRLHMEEDAGKSTHKGEYSLVDLNRQGTPLIEIVSEPDIRSPKEAYAYLEKLRSIIQYTGVSDVKMEEGSLRCDANISLRPYGQEKFGTKAELKNLNSFNYVRKGLEYEEKRQEEELLNGGEIGQETRRFDESTGKTILMRVKEGSDDYRYFPEPDIVPLYIDDAWKERVRQTIPELPDERKAKYVNELGLPAYDAHVLTLTKEMSDFFESTIEHGADVKLTSNWLMGGVNEYLNKNQVELLDTKLTPENLAGMIKLIEDGTMSSKIAKKVFPELAAKGGNAKQIMEDNGLVQISDEATLLKFVNEALDNNEQSVEDYKNGKGKAMGFLVGQIMKASKGQANPQLVNQLLKQELDKR.

This sequence belongs to the GatB/GatE family. GatB subfamily. As to quaternary structure, heterotrimer of A, B and C subunits.

The enzyme catalyses L-glutamyl-tRNA(Gln) + L-glutamine + ATP + H2O = L-glutaminyl-tRNA(Gln) + L-glutamate + ADP + phosphate + H(+). It carries out the reaction L-aspartyl-tRNA(Asn) + L-glutamine + ATP + H2O = L-asparaginyl-tRNA(Asn) + L-glutamate + ADP + phosphate + 2 H(+). In terms of biological role, allows the formation of correctly charged Asn-tRNA(Asn) or Gln-tRNA(Gln) through the transamidation of misacylated Asp-tRNA(Asn) or Glu-tRNA(Gln) in organisms which lack either or both of asparaginyl-tRNA or glutaminyl-tRNA synthetases. The reaction takes place in the presence of glutamine and ATP through an activated phospho-Asp-tRNA(Asn) or phospho-Glu-tRNA(Gln). The polypeptide is Aspartyl/glutamyl-tRNA(Asn/Gln) amidotransferase subunit B (Staphylococcus aureus (strain COL)).